A 329-amino-acid chain; its full sequence is Biotin synthase (329 aa).

Residues 38-262 (NTIQVSTLLS…IMPHSYIRLS (225 aa)) form the Radical SAM core domain. Positions 53, 57, and 60 each coordinate [4Fe-4S] cluster. Cysteine 97, cysteine 128, cysteine 188, and arginine 260 together coordinate [2Fe-2S] cluster.

This sequence belongs to the radical SAM superfamily. Biotin synthase family. As to quaternary structure, homodimer. [4Fe-4S] cluster is required as a cofactor. Requires [2Fe-2S] cluster as cofactor.

The enzyme catalyses (4R,5S)-dethiobiotin + (sulfur carrier)-SH + 2 reduced [2Fe-2S]-[ferredoxin] + 2 S-adenosyl-L-methionine = (sulfur carrier)-H + biotin + 2 5'-deoxyadenosine + 2 L-methionine + 2 oxidized [2Fe-2S]-[ferredoxin]. Its pathway is cofactor biosynthesis; biotin biosynthesis; biotin from 7,8-diaminononanoate: step 2/2. In terms of biological role, catalyzes the conversion of dethiobiotin (DTB) to biotin by the insertion of a sulfur atom into dethiobiotin via a radical-based mechanism. The protein is Biotin synthase of Acinetobacter baumannii (strain ACICU).